A 365-amino-acid polypeptide reads, in one-letter code: GTPase Obg (365 aa).

Residues 1 to 159 (MKFIDEARIE…RMLKLELKVL (159 aa)) form the Obg domain. Residues 160-334 (ADVGLLGMPN…LIYAIKDHLQ (175 aa)) enclose the OBG-type G domain. GTP-binding positions include 166–173 (GMPNAGKS), 191–195 (FTTLH), 213–216 (DIPG), 284–287 (NKLD), and 315–317 (SAL). Positions 173 and 193 each coordinate Mg(2+).

This sequence belongs to the TRAFAC class OBG-HflX-like GTPase superfamily. OBG GTPase family. Monomer. Mg(2+) is required as a cofactor.

It localises to the cytoplasm. An essential GTPase which binds GTP, GDP and possibly (p)ppGpp with moderate affinity, with high nucleotide exchange rates and a fairly low GTP hydrolysis rate. Plays a role in control of the cell cycle, stress response, ribosome biogenesis and in those bacteria that undergo differentiation, in morphogenesis control. This chain is GTPase Obg, found in Cupriavidus taiwanensis (strain DSM 17343 / BCRC 17206 / CCUG 44338 / CIP 107171 / LMG 19424 / R1) (Ralstonia taiwanensis (strain LMG 19424)).